Reading from the N-terminus, the 103-residue chain is uncharacterized protein (103 aa).

Composition is skewed to polar residues over residues 1-10 and 18-28; these read MSNSCSTSSY and TRSGSNVNRNY. Residues 1–28 are disordered; sequence MSNSCSTSSYPIRRKTPTRSGSNVNRNY.

This is an uncharacterized protein from Acanthamoeba polyphaga mimivirus (APMV).